The primary structure comprises 180 residues: Shikimate kinase (180 aa).

ATP is bound at residue 14–19 (GAGKSC). Serine 18 contributes to the Mg(2+) binding site. Substrate is bound by residues aspartate 36, arginine 60, and glycine 82. Residue arginine 120 participates in ATP binding. Substrate is bound at residue arginine 139.

Belongs to the shikimate kinase family. Monomer. Requires Mg(2+) as cofactor.

The protein resides in the cytoplasm. It carries out the reaction shikimate + ATP = 3-phosphoshikimate + ADP + H(+). It functions in the pathway metabolic intermediate biosynthesis; chorismate biosynthesis; chorismate from D-erythrose 4-phosphate and phosphoenolpyruvate: step 5/7. Catalyzes the specific phosphorylation of the 3-hydroxyl group of shikimic acid using ATP as a cosubstrate. The chain is Shikimate kinase from Xanthomonas euvesicatoria pv. vesicatoria (strain 85-10) (Xanthomonas campestris pv. vesicatoria).